The following is a 457-amino-acid chain: Zinc finger protein ZIPIC (457 aa).

Residues cysteine 3 to methionine 84 enclose the ZAD domain. 6 consecutive C2H2-type zinc fingers follow at residues isoleucine 257–histidine 280, tyrosine 284–histidine 306, phenylalanine 312–histidine 334, tyrosine 340–histidine 362, leucine 369–histidine 391, and phenylalanine 397–histidine 419. The C2H2-type 7; degenerate zinc-finger motif lies at phenylalanine 430–histidine 448.

In terms of assembly, interacts (via region between the ZAD domain and the first zinc finger domain) with Cp190 (via centrosomal targeting M domain); the interaction is direct. Interacts with pita.

It is found in the nucleus. The protein resides in the chromosome. In terms of biological role, insulator DNA-binding protein. Recruits Cp190 and cooperatively binds to chromatin promoter regions to exert transcriptional regulator and chromatin insulator functions. Chromatin insulators are regulatory elements that establish independent domains of transcriptional activity within eukaryotic genomes. Insulators are proposed to structure the chromatin fiber into independent domains of differing transcriptional potential by promoting the formation of distinct chromatin loops to form topologically associating domains (TADs). Chromatin binding sites often cluster with those of other insulator DNA-binding proteins such as pita, CTCF and BEAF-32, but not Su(Hw). In Drosophila melanogaster (Fruit fly), this protein is Zinc finger protein ZIPIC.